We begin with the raw amino-acid sequence, 300 residues long: MLKEKNLKWLSLFTTVLMLFVQIGGALVTKTGSADGCGSSWPLCHGKFVPTHIPKETLIELAHRGVSGLALLSVTWLVILSIKYIGHKKETKFLCYMSIGFIFAQALIGAAAVMWQQNGFVLALHFGISLISFSAVFLLTLLIFEVDQKFDATKLILQPKLRRHTIGLTSFIYFVIYSGALVRHEKASLACSSWPLCRKGAFILPQNFYEWVQMSHRTLAFILFIWLTYVAFHAMRNYAQYRVIKYGYMIAFILICLQVTTGALTIFTAVNLYIALLHALFITLLFGLLCYFILLISRAK.

The Cytoplasmic segment spans residues 1–8 (MLKEKNLK). A helical membrane pass occupies residues 9-29 (WLSLFTTVLMLFVQIGGALVT). The Extracellular segment spans residues 30–64 (KTGSADGCGSSWPLCHGKFVPTHIPKETLIELAHR). C37 and C44 form a disulfide bridge. E60 is a catalytic residue. H63 is a heme o binding site. Residues 65-85 (GVSGLALLSVTWLVILSIKYI) form a helical membrane-spanning segment. At 86 to 92 (GHKKETK) the chain is on the cytoplasmic side. Residues 93 to 113 (FLCYMSIGFIFAQALIGAAAV) form a helical membrane-spanning segment. Residues 114–123 (MWQQNGFVLA) are Extracellular-facing. A helical transmembrane segment spans residues 124–144 (LHFGISLISFSAVFLLTLLIF). H125 serves as a coordination point for heme o. At 145–163 (EVDQKFDATKLILQPKLRR) the chain is on the cytoplasmic side. The helical transmembrane segment at 164-184 (HTIGLTSFIYFVIYSGALVRH) threads the bilayer. Topologically, residues 185–218 (EKASLACSSWPLCRKGAFILPQNFYEWVQMSHRT) are extracellular. The cysteines at positions 191 and 197 are disulfide-linked. A heme b-binding site is contributed by H216. A helical membrane pass occupies residues 219–239 (LAFILFIWLTYVAFHAMRNYA). The Cytoplasmic segment spans residues 240-249 (QYRVIKYGYM). Residues 250 to 270 (IAFILICLQVTTGALTIFTAV) traverse the membrane as a helical segment. Topologically, residues 271 to 275 (NLYIA) are extracellular. The helical transmembrane segment at 276 to 296 (LLHALFITLLFGLLCYFILLI) threads the bilayer. Position 278 (H278) interacts with heme b. The Cytoplasmic segment spans residues 297–300 (SRAK).

This sequence belongs to the COX15/CtaA family. Type 1 subfamily. As to quaternary structure, interacts with CtaB. Heme b is required as a cofactor.

Its subcellular location is the cell membrane. The enzyme catalyses Fe(II)-heme o + 2 A + H2O = Fe(II)-heme a + 2 AH2. The protein operates within porphyrin-containing compound metabolism; heme A biosynthesis; heme A from heme O: step 1/1. In terms of biological role, catalyzes the conversion of heme O to heme A by two successive hydroxylations of the methyl group at C8. The first hydroxylation forms heme I, the second hydroxylation results in an unstable dihydroxymethyl group, which spontaneously dehydrates, resulting in the formyl group of heme A. In Macrococcus caseolyticus (strain JCSC5402) (Macrococcoides caseolyticum), this protein is Heme A synthase.